A 252-amino-acid polypeptide reads, in one-letter code: Cell division protein ZapD (252 aa).

This sequence belongs to the ZapD family. As to quaternary structure, interacts with FtsZ.

The protein localises to the cytoplasm. Cell division factor that enhances FtsZ-ring assembly. Directly interacts with FtsZ and promotes bundling of FtsZ protofilaments, with a reduction in FtsZ GTPase activity. This Ralstonia pickettii (strain 12J) protein is Cell division protein ZapD.